The chain runs to 623 residues: Set1/Ash2 histone methyltransferase complex subunit ASH2 (623 aa).

Gly residues predominate over residues 1-18; the sequence is MAAAGAGPGPGVSAGPGP. A PHD-type; atypical zinc finger spans residues 1-62; sequence MAAAGAGPGP…SGEAESGDAN (62 aa). The tract at residues 1 to 99 is disordered; that stretch reads MAAAGAGPGP…MDTQAGSVDE (99 aa). Residues 36–56 show a composition bias toward low complexity; it reads AAGAGEGPSAAPGAEPSSGEA. A DNA-binding region spans residues 63–172; sequence LVDVSGLETE…MCLSALANLT (110 aa). The segment covering 84–95 has biased composition (polar residues); the sequence is GDTSEVMDTQAG. At S96 the chain carries Phosphoserine. A C4-type zinc finger spans residues 112–145; the sequence is CGICTKWFTADTFGIDTSSCLPFMTNYSFHCNVC. Basic and acidic residues predominate over residues 230 to 247; it reads LVKEHPDPGSKDPEEDYP. The segment at 230 to 326 is disordered; sequence LVKEHPDPGS…AQRLPPHGYP (97 aa). The span at 265-277 shows a compositional bias: polar residues; the sequence is NQKQSSAVSASGN. The span at 278–290 shows a compositional bias: gly residues; it reads LNGGIAAGSSGKG. An Asymmetric dimethylarginine; by PRMT1 and PRMT5 modification is found at R291. Position 311 is a phosphoserine (S311). An interaction with RBBP5 region spans residues 311-623; that stretch reads SDPLFSAQRL…DGRRSPPWEP (313 aa). Residues 355 to 578 enclose the B30.2/SPRY domain; the sequence is LDCWAGKPIP…VSINFGPSFK (224 aa).

As to quaternary structure, interacts with HCFC1. Core component of several methyltransferase-containing complexes including MLL1/MLL, MLL2/3 (also named ASCOM complex) and MLL4/WBP7. Each complex is at least composed of ASH2L, RBBP5, WDR5, DPY30, one or more specific histone methyltransferases (KMT2A/MLL1, KMT2D/MLL2, KMT2C/MLL3 and KMT2B/MLL4), and the facultative components PAGR1, BACC1, CHD8, E2F6, HCFC1, HCFC2, HSP70, INO80C, KDM6A, KANSL1, LAS1L, MAX, MCRS1, MEN1, MGA, KAT8/MOF, NCOA6, PAXIP1/PTIP, PELP1, PHF20, PRP31, RING2, RUVB1/TIP49A, RUVB2/TIP49B, SENP3, TAF1, TAF4, TAF6, TAF7, TAF9, TEX10 and alpha- and beta-tubulin. Component of the SET1 complex, at least composed of the catalytic subunit (SETD1A or SETD1B), WDR5, WDR82, RBBP5, ASH2L/ASH2, CXXC1/CFP1, HCFC1 and DPY30. Found in a complex with RBBP5, ASH2L, DPY30, KMT2A, KMT2D and WDR5. Component of a histone methylation complex composed of at least ZNF335, RBBP5, ASH2L and WDR5; the complex may have histone H3-specific methyltransferase activity, however does not have specificity for 'Lys-4' of histone H3. Within the complex, interacts with ZNF335. Interacts with RBBP5. Components of this complex may associate with components of a nuclear receptor-mediated transcription complex to form a complex at least composed of ZNF335, HCFC1, CCAR2, EMSY, MKI67, RBBP5, ASH2L and WDR5. Within this complex also interacts with CCAR2 and EMSY. Interacts with DPY30. Interacts with SETD1A and SETD1B. In terms of processing, both monomethylated and dimethylated on arginine residues in the C-terminus. Arg-291 is the major site. Methylation is not required for nuclear localization, nor for MLL complex integrity or maintenance of global histone H3K4me3 levels. As to expression, ubiquitously expressed, with abundant expression in the heart, skeletal muscle and kidney. Low expression is seen in spleen, lung and testis.

The protein localises to the nucleus. Functionally, transcriptional regulator. Component or associated component of some histone methyltransferase complexes which regulates transcription through recruitment of those complexes to gene promoters. Component of the Set1/Ash2 histone methyltransferase (HMT) complex, a complex that specifically methylates 'Lys-4' of histone H3, but not if the neighboring 'Lys-9' residue is already methylated. As part of the MLL1/MLL complex it is involved in methylation and dimethylation at 'Lys-4' of histone H3. May play a role in hematopoiesis. In association with RBBP5 and WDR5, stimulates the histone methyltransferase activities of KMT2A, KMT2B, KMT2C, KMT2D, SETD1A and SETD1B. The protein is Set1/Ash2 histone methyltransferase complex subunit ASH2 (Ash2l) of Mus musculus (Mouse).